A 493-amino-acid chain; its full sequence is Aspartyl/glutamyl-tRNA(Asn/Gln) amidotransferase subunit B (493 aa).

Positions 268–291 (HYQEADGSTSKGRPKETAEDYRYF) are disordered. Basic and acidic residues predominate over residues 280–291 (RPKETAEDYRYF).

Belongs to the GatB/GatE family. GatB subfamily. Heterotrimer of A, B and C subunits.

The enzyme catalyses L-glutamyl-tRNA(Gln) + L-glutamine + ATP + H2O = L-glutaminyl-tRNA(Gln) + L-glutamate + ADP + phosphate + H(+). It catalyses the reaction L-aspartyl-tRNA(Asn) + L-glutamine + ATP + H2O = L-asparaginyl-tRNA(Asn) + L-glutamate + ADP + phosphate + 2 H(+). Its function is as follows. Allows the formation of correctly charged Asn-tRNA(Asn) or Gln-tRNA(Gln) through the transamidation of misacylated Asp-tRNA(Asn) or Glu-tRNA(Gln) in organisms which lack either or both of asparaginyl-tRNA or glutaminyl-tRNA synthetases. The reaction takes place in the presence of glutamine and ATP through an activated phospho-Asp-tRNA(Asn) or phospho-Glu-tRNA(Gln). The sequence is that of Aspartyl/glutamyl-tRNA(Asn/Gln) amidotransferase subunit B from Corynebacterium glutamicum (strain ATCC 13032 / DSM 20300 / JCM 1318 / BCRC 11384 / CCUG 27702 / LMG 3730 / NBRC 12168 / NCIMB 10025 / NRRL B-2784 / 534).